Reading from the N-terminus, the 519-residue chain is B3 domain-containing protein Os03g0620400 (519 aa).

A DNA-binding region (TF-B3 1) is located at residues Met-26–Asp-119. The disordered stretch occupies residues Glu-138 to Tyr-218. Residues Ser-189–Asp-209 are compositionally biased toward acidic residues. 2 DNA-binding regions (TF-B3) span residues Val-249 to Thr-349 and Tyr-416 to Asn-516.

The protein localises to the nucleus. The sequence is that of B3 domain-containing protein Os03g0620400 from Oryza sativa subsp. japonica (Rice).